A 436-amino-acid chain; its full sequence is 3-ketoacyl-CoA thiolase (436 aa).

The Acyl-thioester intermediate role is filled by C99. Catalysis depends on proton acceptor residues H392 and C422.

This sequence belongs to the thiolase-like superfamily. Thiolase family. In terms of assembly, heterotetramer of two alpha chains (FadJ) and two beta chains (FadI).

The protein localises to the cytoplasm. The enzyme catalyses an acyl-CoA + acetyl-CoA = a 3-oxoacyl-CoA + CoA. It functions in the pathway lipid metabolism; fatty acid beta-oxidation. Functionally, catalyzes the final step of fatty acid oxidation in which acetyl-CoA is released and the CoA ester of a fatty acid two carbons shorter is formed. This is 3-ketoacyl-CoA thiolase from Salmonella paratyphi C (strain RKS4594).